The following is a 228-amino-acid chain: 2,3-bisphosphoglycerate-dependent phosphoglycerate mutase (228 aa).

Substrate is bound by residues 8-15 (RHGQSEWN), 21-22 (TG), Arg-60, 87-90 (ERHY), Lys-98, 114-115 (RR), and 183-184 (GN). Residue His-9 is the Tele-phosphohistidine intermediate of the active site. The active-site Proton donor/acceptor is the Glu-87.

This sequence belongs to the phosphoglycerate mutase family. BPG-dependent PGAM subfamily.

It carries out the reaction (2R)-2-phosphoglycerate = (2R)-3-phosphoglycerate. It participates in carbohydrate degradation; glycolysis; pyruvate from D-glyceraldehyde 3-phosphate: step 3/5. Functionally, catalyzes the interconversion of 2-phosphoglycerate and 3-phosphoglycerate. This is 2,3-bisphosphoglycerate-dependent phosphoglycerate mutase from Staphylococcus aureus (strain Mu3 / ATCC 700698).